Reading from the N-terminus, the 78-residue chain is 4-methyl-3-hydroxyanthranilic acid carrier protein (78 aa).

Ser33 is subject to O-(pantetheine 4'-phosphoryl)serine.

It belongs to the acyl carrier protein (ACP) family. In terms of processing, 4'-phosphopantetheine is transferred from CoA to a specific serine of the apo-form of this carrier protein.

It functions in the pathway antibiotic biosynthesis. In terms of biological role, involved in the biosynthesis of actinomycin. Acts as a carrier in the transfer and thioesterification of 4-methyl-3-hydroxyanthranilic acid (4-MHA). This is 4-methyl-3-hydroxyanthranilic acid carrier protein from Streptomyces anulatus (Streptomyces chrysomallus).